The primary structure comprises 404 residues: POU domain, class 2, transcription factor 3L (404 aa).

Disordered regions lie at residues 1–29 and 44–67; these read MNRE…TLDF and TGIP…MTGE. Residues 16–29 are compositionally biased toward basic and acidic residues; it reads GHLENDAERDTLDF. The POU-specific domain maps to 187–235; the sequence is QGDVGLAMGKLYGNDFSQTTISRFEALNLSFKNMCKLKPLLEKWLNDAE. A DNA-binding region (homeobox) is located at residues 259 to 297; sequence KRKKRTSIETNIRLTLEKRFQDNPKPSSEEISMIAEQLV. The interval 346-367 is disordered; that stretch reads MTVTSSCSPGNSSRPSSPTCGL. Positions 350–363 are enriched in low complexity; that stretch reads SSCSPGNSSRPSSP.

The protein belongs to the POU transcription factor family. Class-2 subfamily.

The protein resides in the nucleus. Its function is as follows. Transcription factor that binds to the octamer motif (5'-ATTTGCAT-3') and regulates cell type-specific differentiation pathways. The protein is POU domain, class 2, transcription factor 3L (pou2f3.L) of Xenopus laevis (African clawed frog).